The chain runs to 1012 residues: Isoleucine--tRNA ligase, mitochondrial (1012 aa).

The transit peptide at 1–48 (MHWGLCPRGPGAAAVAAAGSFWGPARLPSRLGCLGMTRRLVVRSVAGA) directs the protein to the mitochondrion. At Lys-56 the chain carries N6-succinyllysine. The residue at position 74 (Lys-74) is an N6-acetyllysine; alternate. Lys-74 bears the N6-succinyllysine; alternate mark. The short motif at 116–126 (PYANGDPHVGH) is the 'HIGH' region element. Lys-194 is modified (N6-succinyllysine). The residue at position 233 (Lys-233) is an N6-acetyllysine. N6-acetyllysine; alternate is present on Lys-241. Lys-241 carries the post-translational modification N6-succinyllysine; alternate. An N6-succinyllysine mark is found at Lys-479 and Lys-500. Lys-664 and Lys-667 together coordinate ATP. Residues 664 to 668 (KMSKS) carry the 'KMSKS' region motif. Lys-725 is subject to N6-acetyllysine. N6-acetyllysine; alternate is present on residues Lys-775 and Lys-781. Residues Lys-775 and Lys-781 each carry the N6-succinyllysine; alternate modification.

The protein belongs to the class-I aminoacyl-tRNA synthetase family.

The protein resides in the mitochondrion matrix. It carries out the reaction tRNA(Ile) + L-isoleucine + ATP = L-isoleucyl-tRNA(Ile) + AMP + diphosphate. Its function is as follows. Aminoacyl-tRNA synthetase that catalyzes the specific attachment of isoleucine to its cognate tRNA (tRNA(Ile)). This Mus musculus (Mouse) protein is Isoleucine--tRNA ligase, mitochondrial.